Reading from the N-terminus, the 164-residue chain is Glutamate uptake regulatory protein (164 aa).

The HTH asnC-type domain occupies 5 to 66; it reads LDDFDIKILD…LLDPQKIGLG (62 aa). The segment at residues 24–43 is a DNA-binding region (H-T-H motif); that stretch reads MAELSEKTGLSANACWRRIR.

Represses the secondary, H(+)-coupled glutamate uptake system (Gluemp) genes. The chain is Glutamate uptake regulatory protein (grp) from Zymomonas mobilis subsp. mobilis (strain ATCC 10988 / DSM 424 / LMG 404 / NCIMB 8938 / NRRL B-806 / ZM1).